Here is a 219-residue protein sequence, read N- to C-terminus: 7-cyano-7-deazaguanine synthase (219 aa).

9 to 19 (YSGGMDSFTVL) is a binding site for ATP. Cys-185, Cys-193, Cys-196, and Cys-199 together coordinate Zn(2+).

The protein belongs to the QueC family. Requires Zn(2+) as cofactor.

It carries out the reaction 7-carboxy-7-deazaguanine + NH4(+) + ATP = 7-cyano-7-deazaguanine + ADP + phosphate + H2O + H(+). The protein operates within purine metabolism; 7-cyano-7-deazaguanine biosynthesis. Catalyzes the ATP-dependent conversion of 7-carboxy-7-deazaguanine (CDG) to 7-cyano-7-deazaguanine (preQ(0)). The chain is 7-cyano-7-deazaguanine synthase from Marinomonas sp. (strain MWYL1).